We begin with the raw amino-acid sequence, 175 residues long: Crossover junction endodeoxyribonuclease RuvC (175 aa).

Catalysis depends on residues D7, E68, and D141. Mg(2+) is bound by residues D7, E68, and D141.

Belongs to the RuvC family. In terms of assembly, homodimer which binds Holliday junction (HJ) DNA. The HJ becomes 2-fold symmetrical on binding to RuvC with unstacked arms; it has a different conformation from HJ DNA in complex with RuvA. In the full resolvosome a probable DNA-RuvA(4)-RuvB(12)-RuvC(2) complex forms which resolves the HJ. The cofactor is Mg(2+).

It is found in the cytoplasm. The enzyme catalyses Endonucleolytic cleavage at a junction such as a reciprocal single-stranded crossover between two homologous DNA duplexes (Holliday junction).. Its function is as follows. The RuvA-RuvB-RuvC complex processes Holliday junction (HJ) DNA during genetic recombination and DNA repair. Endonuclease that resolves HJ intermediates. Cleaves cruciform DNA by making single-stranded nicks across the HJ at symmetrical positions within the homologous arms, yielding a 5'-phosphate and a 3'-hydroxyl group; requires a central core of homology in the junction. The consensus cleavage sequence is 5'-(A/T)TT(C/G)-3'. Cleavage occurs on the 3'-side of the TT dinucleotide at the point of strand exchange. HJ branch migration catalyzed by RuvA-RuvB allows RuvC to scan DNA until it finds its consensus sequence, where it cleaves and resolves the cruciform DNA. The chain is Crossover junction endodeoxyribonuclease RuvC from Salinispora arenicola (strain CNS-205).